Here is a 356-residue protein sequence, read N- to C-terminus: Dynein regulatory complex protein 10 (356 aa).

The stretch at 126–167 forms a coiled coil; sequence SNREFFEEVRDREERAVAEQEQLKQKLKLQRVELQKAAGTIQ. Residues 173–209 form a disordered region; it reads ARGEVSEVQSSTQQSRAAIEGSARAQSEADKSSFQSD. Low complexity predominate over residues 178 to 187; sequence SEVQSSTQQS. Residues 197 to 287 are a coiled coil; it reads AQSEADKSSF…LRQLQEYNSG (91 aa). The region spanning 319–348 is the IQ domain; it reads QNHAARVIQSYWRGFKKAREAAKKKAKKLE.

It belongs to the DRC10 family. As to quaternary structure, component of the nexin-dynein regulatory complex (N-DRC).

The protein resides in the cytoplasm. It is found in the cytoskeleton. Its subcellular location is the flagellum axoneme. Component of the nexin-dynein regulatory complex (N-DRC), a key regulator of ciliary/flagellar motility which maintains the alignment and integrity of the distal axoneme and regulates microtubule sliding in motile axonemes. The protein is Dynein regulatory complex protein 10 of Chlamydomonas reinhardtii (Chlamydomonas smithii).